Reading from the N-terminus, the 314-residue chain is Fibrinogen-like protein 1 (314 aa).

The first 22 residues, 1–22 (MGEIRSFVLITVALILGKESWV), serve as a signal peptide directing secretion. The stretch at 28 to 62 (CLQEQVRLRAQVRQLETRVKQQQVVIAQLLHEKEV) forms a coiled coil. A Fibrinogen C-terminal domain is found at 76-308 (LGGKRHYADC…SVVMKIRPSD (233 aa)). 2 disulfide bridges follow: cysteine 85-cysteine 114 and cysteine 250-cysteine 263.

Homodimer. Interacts (via the Fibrinogen C-terminal domain) with LAG3 (via Ig-like domains 1 and 2).

It is found in the secreted. Its function is as follows. Immune suppressive molecule that inhibits antigen-specific T-cell activation by acting as a major ligand of LAG3. Responsible for LAG3 T-cell inhibitory function. Binds LAG3 independently from MHC class II (MHC-II). Secreted by, and promotes growth of, hepatocytes. In Rattus norvegicus (Rat), this protein is Fibrinogen-like protein 1.